The primary structure comprises 422 residues: Histidine--tRNA ligase (422 aa).

The protein belongs to the class-II aminoacyl-tRNA synthetase family. As to quaternary structure, homodimer.

The protein resides in the cytoplasm. The enzyme catalyses tRNA(His) + L-histidine + ATP = L-histidyl-tRNA(His) + AMP + diphosphate + H(+). The sequence is that of Histidine--tRNA ligase from Vesicomyosocius okutanii subsp. Calyptogena okutanii (strain HA).